The following is a 171-amino-acid chain: Peptide deformylase (171 aa).

Positions 91 and 133 each coordinate Fe cation. Residue Glu134 is part of the active site. His137 is a binding site for Fe cation.

The protein belongs to the polypeptide deformylase family. The cofactor is Fe(2+).

It catalyses the reaction N-terminal N-formyl-L-methionyl-[peptide] + H2O = N-terminal L-methionyl-[peptide] + formate. Its function is as follows. Removes the formyl group from the N-terminal Met of newly synthesized proteins. Requires at least a dipeptide for an efficient rate of reaction. N-terminal L-methionine is a prerequisite for activity but the enzyme has broad specificity at other positions. The chain is Peptide deformylase from Edwardsiella ictaluri (strain 93-146).